Reading from the N-terminus, the 159-residue chain is 2-C-methyl-D-erythritol 2,4-cyclodiphosphate synthase (159 aa).

Residues Asp9 and His11 each coordinate a divalent metal cation. 4-CDP-2-C-methyl-D-erythritol 2-phosphate-binding positions include 9–11 (DVH) and 35–36 (HS). His43 provides a ligand contact to a divalent metal cation. 4-CDP-2-C-methyl-D-erythritol 2-phosphate is bound by residues 57-59 (DLG), 62-66 (FPDTD), 133-136 (TTTE), Phe140, and Arg143.

This sequence belongs to the IspF family. As to quaternary structure, homotrimer. A divalent metal cation is required as a cofactor.

The enzyme catalyses 4-CDP-2-C-methyl-D-erythritol 2-phosphate = 2-C-methyl-D-erythritol 2,4-cyclic diphosphate + CMP. The protein operates within isoprenoid biosynthesis; isopentenyl diphosphate biosynthesis via DXP pathway; isopentenyl diphosphate from 1-deoxy-D-xylulose 5-phosphate: step 4/6. Functionally, involved in the biosynthesis of isopentenyl diphosphate (IPP) and dimethylallyl diphosphate (DMAPP), two major building blocks of isoprenoid compounds. Catalyzes the conversion of 4-diphosphocytidyl-2-C-methyl-D-erythritol 2-phosphate (CDP-ME2P) to 2-C-methyl-D-erythritol 2,4-cyclodiphosphate (ME-CPP) with a corresponding release of cytidine 5-monophosphate (CMP). This Shouchella clausii (strain KSM-K16) (Alkalihalobacillus clausii) protein is 2-C-methyl-D-erythritol 2,4-cyclodiphosphate synthase.